Consider the following 110-residue polypeptide: uncharacterized protein (110 aa).

Disordered stretches follow at residues 1-41 (MEWG…ERAQ) and 65-110 (LRQL…ASES). A coiled-coil region spans residues 38–68 (ERAQQLLDAVEQRQRQLLDTIAACEEMLRQL).

This is an uncharacterized protein from Mus musculus (Mouse).